A 416-amino-acid chain; its full sequence is MKIMILGSGAREYSIALALRRVDKNLEFYFAPGNGATESLGTNLNLKDPVVLATYAKEKGFDLCIVGSESFLAEGVVDIFKQQGLAIFGPSKAAAMLETSKSFMKSFLKKYRIKTAKFLNTNDIEKAKNFIYSLTPPIVVKADGLCAGKGVIIAKTHEEAIEETAKMLSGESFGDAGKLVVIEEFLDGYELSIFAVCDGNDFVLLPAAQDHKKLLDNDQGPNTGGMGAYAPSSLANESLLRKVQKDIILPTLAGMKKEGAEFCGVLFIGAMIVGNKPYVLEFNVRFGDPECEVLMPLIEDPLELILAATQRRLRHSKIKIKKEFAVGVVCASENYPYKSSPKSEITVNNIPENSHISYAGVSLEDGKLMADGGRVLVCVGTGKSIEEAQKNAYKLCDNVNFKGKQYRKDIAHQVLK.

The ATP-grasp domain occupies 105 to 310; it reads KSFLKKYRIK…PLELILAATQ (206 aa). 131–192 provides a ligand contact to ATP; that stretch reads IYSLTPPIVV…EEFLDGYELS (62 aa). Mg(2+)-binding residues include E281 and N283.

Belongs to the GARS family. Mg(2+) is required as a cofactor. It depends on Mn(2+) as a cofactor.

The catalysed reaction is 5-phospho-beta-D-ribosylamine + glycine + ATP = N(1)-(5-phospho-beta-D-ribosyl)glycinamide + ADP + phosphate + H(+). It participates in purine metabolism; IMP biosynthesis via de novo pathway; N(1)-(5-phospho-D-ribosyl)glycinamide from 5-phospho-alpha-D-ribose 1-diphosphate: step 2/2. The sequence is that of Phosphoribosylamine--glycine ligase from Campylobacter jejuni subsp. jejuni serotype O:2 (strain ATCC 700819 / NCTC 11168).